The primary structure comprises 241 residues: 3-deoxy-manno-octulosonate cytidylyltransferase (241 aa).

This sequence belongs to the KdsB family.

It localises to the cytoplasm. It carries out the reaction 3-deoxy-alpha-D-manno-oct-2-ulosonate + CTP = CMP-3-deoxy-beta-D-manno-octulosonate + diphosphate. It functions in the pathway nucleotide-sugar biosynthesis; CMP-3-deoxy-D-manno-octulosonate biosynthesis; CMP-3-deoxy-D-manno-octulosonate from 3-deoxy-D-manno-octulosonate and CTP: step 1/1. It participates in bacterial outer membrane biogenesis; lipopolysaccharide biosynthesis. Functionally, activates KDO (a required 8-carbon sugar) for incorporation into bacterial lipopolysaccharide in Gram-negative bacteria. This is 3-deoxy-manno-octulosonate cytidylyltransferase from Rickettsia typhi (strain ATCC VR-144 / Wilmington).